A 661-amino-acid chain; its full sequence is Threonine--tRNA ligase (661 aa).

Residues 1 to 64 (MSHSVSLTFP…ADGKIEIVTR (64 aa)) enclose the TGS domain. Residues 245 to 547 (DHRRLGREMD…LLENYAGHMP (303 aa)) are catalytic. Residues Cys-341, His-392, and His-524 each coordinate Zn(2+).

It belongs to the class-II aminoacyl-tRNA synthetase family. In terms of assembly, homodimer. Zn(2+) is required as a cofactor.

Its subcellular location is the cytoplasm. The catalysed reaction is tRNA(Thr) + L-threonine + ATP = L-threonyl-tRNA(Thr) + AMP + diphosphate + H(+). Catalyzes the attachment of threonine to tRNA(Thr) in a two-step reaction: L-threonine is first activated by ATP to form Thr-AMP and then transferred to the acceptor end of tRNA(Thr). Also edits incorrectly charged L-seryl-tRNA(Thr). The polypeptide is Threonine--tRNA ligase (Sinorhizobium fredii (strain NBRC 101917 / NGR234)).